Reading from the N-terminus, the 593-residue chain is Serine/threonine-protein kinase PAK 4 (593 aa).

The CRIB domain occupies 11 to 24 (ISAPSNFEHRVHTG). Positions 25-322 (FDQHEQKFTG…VVDPGDPRSY (298 aa)) are linker. Phosphoserine is present on Ser41. Lys78 carries the post-translational modification N6-methyllysine. Residues 95–303 (TRSNSLRRES…PQREPQRVSH (209 aa)) are disordered. Residue Ser104 is modified to Phosphoserine. A compositionally biased stretch (basic and acidic residues) spans 118-133 (LEERAAPARMAPDKAG). Ser148 carries the phosphoserine modification. The span at 149-164 (GDRRRVGPEKRPKSSR) shows a compositional bias: basic and acidic residues. At Ser181 the chain carries Phosphoserine. The segment covering 184 to 197 (DVSTPQPGSLTSGT) has biased composition (polar residues). Phosphothreonine is present on Thr187. Position 195 is a phosphoserine (Ser195). Thr207 bears the Phosphothreonine mark. A compositionally biased stretch (low complexity) spans 238–258 (AAPQSSSSSRPPTRARGAPSP). Phosphoserine occurs at positions 257 and 266. Residues 267–280 (EPQLAPPARALAAP) are compositionally biased toward low complexity. The segment covering 281-292 (AVPPAPGPPGPR) has biased composition (pro residues). Ser293 carries the post-translational modification Phosphoserine. Residues 294-303 (PQREPQRVSH) show a composition bias toward basic and acidic residues. One can recognise a Protein kinase domain in the interval 323–574 (LDNFIKIGEG…AAELLKHPFL (252 aa)). ATP-binding positions include 329–337 (IGEGSTGIV) and Lys352. The active-site Proton acceptor is Asp442. The residue at position 476 (Ser476) is a Phosphoserine; by autocatalysis.

It belongs to the protein kinase superfamily. STE Ser/Thr protein kinase family. STE20 subfamily. As to quaternary structure, interacts tightly with GTP-bound but not GDP-bound CDC42/p21 and weakly with RAC1. Interacts with FGFR2 and GRB2. Interacts with INKA1. Interacts with SH3RF2. Interacts with RHOU and PAXI; the PAK4-RHOU complex protects RHOU from ubiquitination and acts as a scaffold to suppport paxillin/PAXI phosphorylation. Post-translationally, autophosphorylated on serine residues when activated by CDC42/p21. Phosphorylated on tyrosine residues upon stimulation of FGFR2. Methylated by SETD6. Polyubiquitinated, leading to its proteasomal degradation.

The protein resides in the cytoplasm. The catalysed reaction is L-seryl-[protein] + ATP = O-phospho-L-seryl-[protein] + ADP + H(+). The enzyme catalyses L-threonyl-[protein] + ATP = O-phospho-L-threonyl-[protein] + ADP + H(+). With respect to regulation, inhibited by INKA1; which inhibits the serine/threonine-protein kinase activity by binding PAK4 in a substrate-like manner. Its function is as follows. Serine/threonine protein kinase that plays a role in a variety of different signaling pathways including cytoskeleton regulation, cell migration, growth, proliferation or cell survival. Activation by various effectors including growth factor receptors or active CDC42 and RAC1 results in a conformational change and a subsequent autophosphorylation on several serine and/or threonine residues. Phosphorylates and inactivates the protein phosphatase SSH1, leading to increased inhibitory phosphorylation of the actin binding/depolymerizing factor cofilin. Decreased cofilin activity may lead to stabilization of actin filaments. Phosphorylates LIMK1, a kinase that also inhibits the activity of cofilin. Phosphorylates integrin beta5/ITGB5 and thus regulates cell motility. Phosphorylates ARHGEF2 and activates the downstream target RHOA that plays a role in the regulation of assembly of focal adhesions and actin stress fibers. Stimulates cell survival by phosphorylating the BCL2 antagonist of cell death BAD. Alternatively, inhibits apoptosis by preventing caspase-8 binding to death domain receptors in a kinase independent manner. Plays a role in cell-cycle progression by controlling levels of the cell-cycle regulatory protein CDKN1A and by phosphorylating RAN. Promotes kinase-independent stabilization of RHOU, thereby contributing to focal adhesion disassembly during cell migration. The protein is Serine/threonine-protein kinase PAK 4 of Mus musculus (Mouse).